A 90-amino-acid polypeptide reads, in one-letter code: DNA-binding protein HU (90 aa).

The segment at 57 to 90 is disordered; sequence ARKGVNPQTRKPITIPERKVPKFKPGKALKEKVK.

The protein belongs to the bacterial histone-like protein family.

Histone-like DNA-binding protein which is capable of wrapping DNA to stabilize it, and thus to prevent its denaturation under extreme environmental conditions. The polypeptide is DNA-binding protein HU (hup) (Thermotoga maritima (strain ATCC 43589 / DSM 3109 / JCM 10099 / NBRC 100826 / MSB8)).